The following is a 527-amino-acid chain: Putative ribose/galactose/methyl galactoside import ATP-binding protein 2 (527 aa).

The segment at 1–31 (MFTARVARPMAGDDAPAASSGSTGSSAPPAS) is disordered. Residues 12–31 (GDDAPAASSGSTGSSAPPAS) show a composition bias toward low complexity. ABC transporter domains lie at 38-274 (LEVR…VGRE) and 284-523 (VPIG…RIMD). 70 to 77 (GENGAGKS) lines the ATP pocket.

The protein belongs to the ABC transporter superfamily. Carbohydrate importer 2 (CUT2) (TC 3.A.1.2) family.

Its subcellular location is the cell inner membrane. The enzyme catalyses D-ribose(out) + ATP + H2O = D-ribose(in) + ADP + phosphate + H(+). The catalysed reaction is D-galactose(out) + ATP + H2O = D-galactose(in) + ADP + phosphate + H(+). Its function is as follows. Part of an ABC transporter complex involved in carbohydrate import. Could be involved in ribose, galactose and/or methyl galactoside import. Responsible for energy coupling to the transport system. This chain is Putative ribose/galactose/methyl galactoside import ATP-binding protein 2, found in Burkholderia lata (strain ATCC 17760 / DSM 23089 / LMG 22485 / NCIMB 9086 / R18194 / 383).